The sequence spans 124 residues: Glycine cleavage system H protein (124 aa).

Positions 22-104 (KAKVGITDFA…YENGYLFIIE (83 aa)) constitute a Lipoyl-binding domain. An N6-lipoyllysine modification is found at lysine 63.

This sequence belongs to the GcvH family. The glycine cleavage system is composed of four proteins: P, T, L and H. (R)-lipoate serves as cofactor.

In terms of biological role, the glycine cleavage system catalyzes the degradation of glycine. The H protein shuttles the methylamine group of glycine from the P protein to the T protein. The protein is Glycine cleavage system H protein of Endomicrobium trichonymphae.